A 412-amino-acid chain; its full sequence is Flap endonuclease 1-B (412 aa).

Residues 1–105 (MGIKGLTKLL…KELAKRSLKR (105 aa)) form an N-domain region. D34 contacts Mg(2+). R71 provides a ligand contact to DNA. Mg(2+) contacts are provided by D87, E159, E161, D180, and D182. An I-domain region spans residues 123–254 (LIEKFSKRTV…QRALKLIRQH (132 aa)). Residue E159 coordinates DNA. DNA is bound by residues G232 and D234. D234 serves as a coordination point for Mg(2+).

Belongs to the XPG/RAD2 endonuclease family. FEN1 subfamily. Interacts with PCNA. Three molecules of FEN1 bind to one PCNA trimer with each molecule binding to one PCNA monomer. PCNA stimulates the nuclease activity without altering cleavage specificity. Mg(2+) is required as a cofactor. Post-translationally, phosphorylated. Phosphorylation upon DNA damage induces relocalization to the nuclear plasma.

Its subcellular location is the nucleus. It is found in the nucleolus. It localises to the nucleoplasm. The protein resides in the mitochondrion. Its function is as follows. Structure-specific nuclease with 5'-flap endonuclease and 5'-3' exonuclease activities involved in DNA replication and repair. During DNA replication, cleaves the 5'-overhanging flap structure that is generated by displacement synthesis when DNA polymerase encounters the 5'-end of a downstream Okazaki fragment. It enters the flap from the 5'-end and then tracks to cleave the flap base, leaving a nick for ligation. Also involved in the long patch base excision repair (LP-BER) pathway, by cleaving within the apurinic/apyrimidinic (AP) site-terminated flap. Acts as a genome stabilization factor that prevents flaps from equilibrating into structures that lead to duplications and deletions. Also possesses 5'-3' exonuclease activity on nicked or gapped double-stranded DNA, and exhibits RNase H activity. Also involved in replication and repair of rDNA and in repairing mitochondrial DNA. The sequence is that of Flap endonuclease 1-B from Oryza sativa subsp. indica (Rice).